Reading from the N-terminus, the 590-residue chain is Cyclin-dependent kinase-like 3 (590 aa).

The Protein kinase domain maps to 4–286 (YETLGKVGEG…SSDLLHHEYF (283 aa)). Residues 10-18 (VGEGSYGTV) and Lys-33 contribute to the ATP site. The [NKR]KIAxRE signature appears at 45–51 (KIAMREI). Asp-125 acts as the Proton acceptor in catalysis. A Phosphothreonine modification is found at Thr-158. Phosphotyrosine is present on Tyr-160. Disordered stretches follow at residues 459–508 (RAKK…SNEN) and 547–590 (LKRE…PDVE). Residues 466–477 (SSQSIGQVMPNS) show a composition bias toward polar residues. Composition is skewed to basic and acidic residues over residues 547 to 556 (LKRESKKTDS) and 580 to 590 (TERKKNLPDVE).

The protein belongs to the protein kinase superfamily. CMGC Ser/Thr protein kinase family. CDC2/CDKX subfamily.

It localises to the cytoplasm. The enzyme catalyses L-seryl-[protein] + ATP = O-phospho-L-seryl-[protein] + ADP + H(+). It carries out the reaction L-threonyl-[protein] + ATP = O-phospho-L-threonyl-[protein] + ADP + H(+). The protein is Cyclin-dependent kinase-like 3 of Macaca fascicularis (Crab-eating macaque).